A 374-amino-acid chain; its full sequence is Flap endonuclease 1 (374 aa).

Residues 1–105 (MGIKGLTALI…ELLQKRFGRR (105 aa)) are N-domain. Aspartate 34 lines the Mg(2+) pocket. Positions 47 and 71 each coordinate DNA. Residue aspartate 87 coordinates Mg(2+). Residues 103 to 122 (GRREEAREQEEEQKDVADAE) are disordered. Residues 123 to 254 (KMDQLARRQV…KTALKLIREH (132 aa)) are I-domain. Mg(2+)-binding residues include glutamate 159, glutamate 161, aspartate 180, and aspartate 182. Position 159 (glutamate 159) interacts with DNA. Positions 232 and 234 each coordinate DNA. Position 234 (aspartate 234) interacts with Mg(2+). Residues 335-374 (SLSQKQQGRLDGFFTVKPGSAPPKRKAEDDKKNVKKKGKK) are disordered. The tract at residues 340 to 348 (QQGRLDGFF) is interaction with PCNA.

Belongs to the XPG/RAD2 endonuclease family. FEN1 subfamily. Interacts with PCNA. Three molecules of FEN1 bind to one PCNA trimer with each molecule binding to one PCNA monomer. PCNA stimulates the nuclease activity without altering cleavage specificity. Mg(2+) is required as a cofactor. Post-translationally, phosphorylated. Phosphorylation upon DNA damage induces relocalization to the nuclear plasma.

Its subcellular location is the nucleus. The protein resides in the nucleolus. The protein localises to the nucleoplasm. It is found in the mitochondrion. Its function is as follows. Structure-specific nuclease with 5'-flap endonuclease and 5'-3' exonuclease activities involved in DNA replication and repair. During DNA replication, cleaves the 5'-overhanging flap structure that is generated by displacement synthesis when DNA polymerase encounters the 5'-end of a downstream Okazaki fragment. It enters the flap from the 5'-end and then tracks to cleave the flap base, leaving a nick for ligation. Also involved in the long patch base excision repair (LP-BER) pathway, by cleaving within the apurinic/apyrimidinic (AP) site-terminated flap. Acts as a genome stabilization factor that prevents flaps from equilibrating into structures that lead to duplications and deletions. Also possesses 5'-3' exonuclease activity on nicked or gapped double-stranded DNA, and exhibits RNase H activity. Also involved in replication and repair of rDNA and in repairing mitochondrial DNA. This chain is Flap endonuclease 1, found in Mycosarcoma maydis (Corn smut fungus).